Reading from the N-terminus, the 253-residue chain is Phosphoadenosine 5'-phosphosulfate reductase (253 aa).

Cysteine 239 functions as the Nucleophile; cysteine thiosulfonate intermediate in the catalytic mechanism.

It belongs to the PAPS reductase family. CysH subfamily.

Its subcellular location is the cytoplasm. It catalyses the reaction [thioredoxin]-disulfide + sulfite + adenosine 3',5'-bisphosphate + 2 H(+) = [thioredoxin]-dithiol + 3'-phosphoadenylyl sulfate. The protein operates within sulfur metabolism; hydrogen sulfide biosynthesis; sulfite from sulfate: step 3/3. Catalyzes the formation of sulfite from phosphoadenosine 5'-phosphosulfate (PAPS) using thioredoxin as an electron donor. This Photobacterium profundum (strain SS9) protein is Phosphoadenosine 5'-phosphosulfate reductase.